The chain runs to 192 residues: Vascular endothelial growth factor A (192 aa).

The N-terminal stretch at 1–26 is a signal peptide; the sequence is MNFLLTWIHWGLAALLYFHNAKVLQA. Cystine bridges form between Cys52/Cys94, Cys83/Cys128, and Cys87/Cys130. The N-linked (GlcNAc...) asparagine glycan is linked to Asn101.

It belongs to the PDGF/VEGF growth factor family. In terms of assembly, homodimer; disulfide-linked. Also found as heterodimer with PGF. Interacts with FLT1/VEGFR1 and KDR/VEGFR2 receptors, heparan sulfate and heparin. Expressed by the venom gland, and probably other tissues.

It is found in the secreted. Its function is as follows. Growth factor active in angiogenesis, vasculogenesis and endothelial cell growth. Induces endothelial cell proliferation, promotes cell migration, inhibits apoptosis and induces permeabilization of blood vessels. The chain is Vascular endothelial growth factor A from Agkistrodon piscivorus piscivorus (Eastern cottonmouth).